The sequence spans 224 residues: Putative ribonuclease Z (224 aa).

Residues D120 and H184 each contribute to the Zn(2+) site.

The protein belongs to the RNase Z family. Homodimer. It depends on Zn(2+) as a cofactor.

The catalysed reaction is Endonucleolytic cleavage of RNA, removing extra 3' nucleotides from tRNA precursor, generating 3' termini of tRNAs. A 3'-hydroxy group is left at the tRNA terminus and a 5'-phosphoryl group is left at the trailer molecule.. Its function is as follows. Zinc phosphodiesterase, which displays some tRNA 3'-processing endonuclease activity. Probably involved in tRNA maturation, by removing a 3'-trailer from precursor tRNA. The polypeptide is Putative ribonuclease Z (rnz) (Mycobacterium tuberculosis (strain CDC 1551 / Oshkosh)).